Here is a 154-residue protein sequence, read N- to C-terminus: Ribonuclease H (154 aa).

The region spanning E5 to D146 is the RNase H type-1 domain. 4 residues coordinate Mg(2+): D14, E52, D74, and D138.

It belongs to the RNase H family. Monomer. The cofactor is Mg(2+).

It is found in the cytoplasm. The catalysed reaction is Endonucleolytic cleavage to 5'-phosphomonoester.. In terms of biological role, endonuclease that specifically degrades the RNA of RNA-DNA hybrids. This Coxiella burnetii (strain CbuK_Q154) (Coxiella burnetii (strain Q154)) protein is Ribonuclease H.